A 101-amino-acid chain; its full sequence is Putative pterin-4-alpha-carbinolamine dehydratase (101 aa).

The protein belongs to the pterin-4-alpha-carbinolamine dehydratase family.

The enzyme catalyses (4aS,6R)-4a-hydroxy-L-erythro-5,6,7,8-tetrahydrobiopterin = (6R)-L-erythro-6,7-dihydrobiopterin + H2O. The sequence is that of Putative pterin-4-alpha-carbinolamine dehydratase from Nitrobacter winogradskyi (strain ATCC 25391 / DSM 10237 / CIP 104748 / NCIMB 11846 / Nb-255).